A 192-amino-acid polypeptide reads, in one-letter code: Pyridoxal 5'-phosphate synthase subunit PdxT (192 aa).

Residue 47-49 (GES) coordinates L-glutamine. Catalysis depends on Cys-79, which acts as the Nucleophile. L-glutamine is bound by residues Arg-106 and 134 to 135 (IR). Catalysis depends on charge relay system residues His-170 and Glu-172.

The protein belongs to the glutaminase PdxT/SNO family. In terms of assembly, in the presence of PdxS, forms a dodecamer of heterodimers. Only shows activity in the heterodimer.

It catalyses the reaction aldehydo-D-ribose 5-phosphate + D-glyceraldehyde 3-phosphate + L-glutamine = pyridoxal 5'-phosphate + L-glutamate + phosphate + 3 H2O + H(+). It carries out the reaction L-glutamine + H2O = L-glutamate + NH4(+). The protein operates within cofactor biosynthesis; pyridoxal 5'-phosphate biosynthesis. Catalyzes the hydrolysis of glutamine to glutamate and ammonia as part of the biosynthesis of pyridoxal 5'-phosphate. The resulting ammonia molecule is channeled to the active site of PdxS. This Geobacillus sp. (strain WCH70) protein is Pyridoxal 5'-phosphate synthase subunit PdxT.